We begin with the raw amino-acid sequence, 150 residues long: Large ribosomal subunit protein bL9 (150 aa).

It belongs to the bacterial ribosomal protein bL9 family.

Its function is as follows. Binds to the 23S rRNA. This Neisseria meningitidis serogroup C (strain 053442) protein is Large ribosomal subunit protein bL9.